The chain runs to 308 residues: Aspartate carbamoyltransferase catalytic subunit (308 aa).

Positions 57 and 58 each coordinate carbamoyl phosphate. Lysine 86 contacts L-aspartate. Carbamoyl phosphate-binding residues include arginine 107, histidine 135, and glutamine 138. Arginine 168 and arginine 229 together coordinate L-aspartate. 2 residues coordinate carbamoyl phosphate: leucine 268 and proline 269.

Belongs to the aspartate/ornithine carbamoyltransferase superfamily. ATCase family. Heterooligomer of catalytic and regulatory chains.

The catalysed reaction is carbamoyl phosphate + L-aspartate = N-carbamoyl-L-aspartate + phosphate + H(+). It participates in pyrimidine metabolism; UMP biosynthesis via de novo pathway; (S)-dihydroorotate from bicarbonate: step 2/3. Functionally, catalyzes the condensation of carbamoyl phosphate and aspartate to form carbamoyl aspartate and inorganic phosphate, the committed step in the de novo pyrimidine nucleotide biosynthesis pathway. This is Aspartate carbamoyltransferase catalytic subunit from Pyrococcus furiosus (strain ATCC 43587 / DSM 3638 / JCM 8422 / Vc1).